A 382-amino-acid chain; its full sequence is Na(+)/H(+) antiporter NhaA (382 aa).

Helical transmembrane passes span 14 to 34 (AGGI…NSAM), 47 to 67 (FGMS…FLLI), 87 to 107 (IFPA…YVAF), 117 to 137 (GWAI…ALLG), 146 to 166 (VFLL…IALF), 171 to 191 (LSTI…MLNA), 205 to 225 (LILW…GVVI), 247 to 267 (ALHP…NAGI), 271 to 291 (GVSL…GLFL), 321 to 341 (IFAV…ISSL), and 353 to 373 (YARL…YSLL).

The protein belongs to the NhaA Na(+)/H(+) (TC 2.A.33) antiporter family.

Its subcellular location is the cell inner membrane. The enzyme catalyses Na(+)(in) + 2 H(+)(out) = Na(+)(out) + 2 H(+)(in). Its function is as follows. Na(+)/H(+) antiporter that extrudes sodium in exchange for external protons. The protein is Na(+)/H(+) antiporter NhaA of Vibrio cholerae serotype O1 (strain ATCC 39541 / Classical Ogawa 395 / O395).